A 303-amino-acid polypeptide reads, in one-letter code: N-acetyl-D-glucosamine kinase (303 aa).

ATP is bound by residues glycine 4–lysine 11 and glycine 133–phenylalanine 140. Residues histidine 157, cysteine 177, cysteine 179, and cysteine 184 each coordinate Zn(2+).

Belongs to the ROK (NagC/XylR) family. NagK subfamily.

It catalyses the reaction N-acetyl-D-glucosamine + ATP = N-acetyl-D-glucosamine 6-phosphate + ADP + H(+). It functions in the pathway cell wall biogenesis; peptidoglycan recycling. In terms of biological role, catalyzes the phosphorylation of N-acetyl-D-glucosamine (GlcNAc) derived from cell-wall degradation, yielding GlcNAc-6-P. The polypeptide is N-acetyl-D-glucosamine kinase (Escherichia coli O139:H28 (strain E24377A / ETEC)).